Consider the following 297-residue polypeptide: Lipoyl synthase (297 aa).

The [4Fe-4S] cluster site is built by Cys37, Cys42, Cys48, Cys63, Cys67, Cys70, and Ser276. The 217-residue stretch at 49–265 (WSRKHATVMI…ERIAKTKGFL (217 aa)) folds into the Radical SAM core domain.

The protein belongs to the radical SAM superfamily. Lipoyl synthase family. [4Fe-4S] cluster serves as cofactor.

It is found in the cytoplasm. The enzyme catalyses [[Fe-S] cluster scaffold protein carrying a second [4Fe-4S](2+) cluster] + N(6)-octanoyl-L-lysyl-[protein] + 2 oxidized [2Fe-2S]-[ferredoxin] + 2 S-adenosyl-L-methionine + 4 H(+) = [[Fe-S] cluster scaffold protein] + N(6)-[(R)-dihydrolipoyl]-L-lysyl-[protein] + 4 Fe(3+) + 2 hydrogen sulfide + 2 5'-deoxyadenosine + 2 L-methionine + 2 reduced [2Fe-2S]-[ferredoxin]. It participates in protein modification; protein lipoylation via endogenous pathway; protein N(6)-(lipoyl)lysine from octanoyl-[acyl-carrier-protein]: step 2/2. In terms of biological role, catalyzes the radical-mediated insertion of two sulfur atoms into the C-6 and C-8 positions of the octanoyl moiety bound to the lipoyl domains of lipoate-dependent enzymes, thereby converting the octanoylated domains into lipoylated derivatives. The chain is Lipoyl synthase from Rickettsia typhi (strain ATCC VR-144 / Wilmington).